A 99-amino-acid polypeptide reads, in one-letter code: Co-chaperonin GroES (99 aa).

This sequence belongs to the GroES chaperonin family. As to quaternary structure, heptamer of 7 subunits arranged in a ring. Interacts with the chaperonin GroEL.

The protein resides in the cytoplasm. In terms of biological role, together with the chaperonin GroEL, plays an essential role in assisting protein folding. The GroEL-GroES system forms a nano-cage that allows encapsulation of the non-native substrate proteins and provides a physical environment optimized to promote and accelerate protein folding. GroES binds to the apical surface of the GroEL ring, thereby capping the opening of the GroEL channel. The polypeptide is Co-chaperonin GroES (Rhodococcus erythropolis (strain PR4 / NBRC 100887)).